A 308-amino-acid chain; its full sequence is Acetaldehyde dehydrogenase (308 aa).

An NAD(+)-binding site is contributed by 10-13 (SGNI). The active-site Acyl-thioester intermediate is cysteine 128. Residues 159–167 (SAGPGTRAN) and asparagine 285 contribute to the NAD(+) site.

This sequence belongs to the acetaldehyde dehydrogenase family.

It carries out the reaction acetaldehyde + NAD(+) + CoA = acetyl-CoA + NADH + H(+). The protein is Acetaldehyde dehydrogenase of Salinispora tropica (strain ATCC BAA-916 / DSM 44818 / JCM 13857 / NBRC 105044 / CNB-440).